A 316-amino-acid polypeptide reads, in one-letter code: Ornithine carbamoyltransferase (316 aa).

Carbamoyl phosphate is bound by residues 59–62 (STRT), Gln86, Arg110, and 137–140 (HPCQ). L-ornithine is bound by residues Asn168, Asp232, and 236–237 (SM). Carbamoyl phosphate contacts are provided by residues 273–274 (CL) and Arg301.

The protein belongs to the aspartate/ornithine carbamoyltransferase superfamily. OTCase family.

The protein localises to the cytoplasm. The enzyme catalyses carbamoyl phosphate + L-ornithine = L-citrulline + phosphate + H(+). It participates in amino-acid biosynthesis; L-arginine biosynthesis; L-arginine from L-ornithine and carbamoyl phosphate: step 1/3. In terms of biological role, reversibly catalyzes the transfer of the carbamoyl group from carbamoyl phosphate (CP) to the N(epsilon) atom of ornithine (ORN) to produce L-citrulline. This is Ornithine carbamoyltransferase from Listeria innocua serovar 6a (strain ATCC BAA-680 / CLIP 11262).